A 411-amino-acid polypeptide reads, in one-letter code: cAMP-dependent protein kinase regulatory subunit (411 aa).

The segment at Met1 to Thr144 is disordered. The dimerization and phosphorylation stretch occupies residues Ala23–Phe159. A compositionally biased stretch (low complexity) spans Ser46–Ser58. Acidic residues predominate over residues Glu85–Pro96. The segment covering Thr119 to Trp136 has biased composition (polar residues). At Ser120 the chain carries Phosphoserine. Residues Leu160 to Glu289, Glu238, Arg247, Leu292 to Ala411, Glu359, and Arg368 each bind 3',5'-cyclic AMP.

The protein belongs to the cAMP-dependent kinase regulatory chain family. Tetramer, composed of 2 regulatory (R) and 2 catalytic (C) subunits. In the presence of cAMP it dissociates into 2 active monomeric C subunits and an R dimer.

The chain is cAMP-dependent protein kinase regulatory subunit (pkaR) from Aspergillus niger.